The following is a 333-amino-acid chain: L-lactate dehydrogenase B chain (333 aa).

Residues 29 to 57 (GQVGMACAVSILMRELADELALVDVIEDK) and arginine 99 contribute to the NAD(+) site. Positions 106, 138, and 169 each coordinate substrate. Residue asparagine 138 coordinates NAD(+). The active-site Proton acceptor is the histidine 193. Substrate is bound at residue threonine 248.

The protein belongs to the LDH/MDH superfamily. LDH family. In terms of assembly, homotetramer.

The protein resides in the cytoplasm. The enzyme catalyses (S)-lactate + NAD(+) = pyruvate + NADH + H(+). It participates in fermentation; pyruvate fermentation to lactate; (S)-lactate from pyruvate: step 1/1. Interconverts simultaneously and stereospecifically pyruvate and lactate with concomitant interconversion of NADH and NAD(+). This chain is L-lactate dehydrogenase B chain (ldhb), found in Anguilla rostrata (American eel).